Here is a 759-residue protein sequence, read N- to C-terminus: Phosphoribosylformylglycinamidine synthase subunit PurL (759 aa).

The active site involves His-46. ATP-binding residues include Tyr-49 and Lys-88. Residue Glu-90 coordinates Mg(2+). Residues 91 to 94 and Arg-113 contribute to the substrate site; that span reads SHNH. The active-site Proton acceptor is His-92. Asp-114 lines the Mg(2+) pocket. Gln-237 lines the substrate pocket. Residue Asp-265 participates in Mg(2+) binding. A substrate-binding site is contributed by 309-311; that stretch reads ESQ. Residues Asp-498 and Gly-535 each contribute to the ATP site. Position 536 (Asn-536) interacts with Mg(2+). Position 538 (Ser-538) interacts with substrate.

This sequence belongs to the FGAMS family. Monomer. Part of the FGAM synthase complex composed of 1 PurL, 1 PurQ and 2 PurS subunits.

Its subcellular location is the cytoplasm. The catalysed reaction is N(2)-formyl-N(1)-(5-phospho-beta-D-ribosyl)glycinamide + L-glutamine + ATP + H2O = 2-formamido-N(1)-(5-O-phospho-beta-D-ribosyl)acetamidine + L-glutamate + ADP + phosphate + H(+). Its pathway is purine metabolism; IMP biosynthesis via de novo pathway; 5-amino-1-(5-phospho-D-ribosyl)imidazole from N(2)-formyl-N(1)-(5-phospho-D-ribosyl)glycinamide: step 1/2. Part of the phosphoribosylformylglycinamidine synthase complex involved in the purines biosynthetic pathway. Catalyzes the ATP-dependent conversion of formylglycinamide ribonucleotide (FGAR) and glutamine to yield formylglycinamidine ribonucleotide (FGAM) and glutamate. The FGAM synthase complex is composed of three subunits. PurQ produces an ammonia molecule by converting glutamine to glutamate. PurL transfers the ammonia molecule to FGAR to form FGAM in an ATP-dependent manner. PurS interacts with PurQ and PurL and is thought to assist in the transfer of the ammonia molecule from PurQ to PurL. This chain is Phosphoribosylformylglycinamidine synthase subunit PurL, found in Anaeromyxobacter sp. (strain K).